The sequence spans 319 residues: Oligopeptide transport system permease protein OppB (319 aa).

The next 6 membrane-spanning stretches (helical) occupy residues 9–29, 99–119, 137–157, 183–203, 248–268, and 289–309; these read ILLMIPQLFILSILVFFFAKL, FWMSLLSVILTYLFAIPMSIV, SITFGIPPYVFYLLIIFIFGY, IYHMILPAFSLAVFGTVGIFT, FGFVITGLLGGAIFAETIFGY, and ALILLNGFLGLLGALLSDIIM. The 211-residue stretch at 95-305 folds into the ABC transmembrane type-1 domain; sequence AINTFWMSLL…FLGLLGALLS (211 aa).

This sequence belongs to the binding-protein-dependent transport system permease family. OppBC subfamily. In terms of assembly, the complex is composed of two ATP-binding proteins (OppD and OppF), two transmembrane proteins (OppB and OppC) and a solute-binding protein (OppA).

It is found in the cell membrane. Its function is as follows. Part of the ABC transporter complex OppABCDF involved in the uptake of oligopeptides. Probably responsible for the translocation of the substrate across the membrane. Essential for uptake of peptides larger than three amino acids and for growth in milk. The sequence is that of Oligopeptide transport system permease protein OppB (oppB) from Lactococcus lactis subsp. lactis (strain IL1403) (Streptococcus lactis).